The following is an 89-amino-acid chain: Small ribosomal subunit protein uS15 (89 aa).

The segment covering 1–11 (MSITAERKAEV) has biased composition (basic and acidic residues). The tract at residues 1 to 24 (MSITAERKAEVIKTSATKAGDTGS) is disordered.

The protein belongs to the universal ribosomal protein uS15 family. In terms of assembly, part of the 30S ribosomal subunit. Forms a bridge to the 50S subunit in the 70S ribosome, contacting the 23S rRNA.

One of the primary rRNA binding proteins, it binds directly to 16S rRNA where it helps nucleate assembly of the platform of the 30S subunit by binding and bridging several RNA helices of the 16S rRNA. Its function is as follows. Forms an intersubunit bridge (bridge B4) with the 23S rRNA of the 50S subunit in the ribosome. The polypeptide is Small ribosomal subunit protein uS15 (Rhodopseudomonas palustris (strain TIE-1)).